We begin with the raw amino-acid sequence, 540 residues long: Phosphoenolpyruvate carboxykinase (ATP) (540 aa).

Arginine 65 serves as a coordination point for substrate. Lysine 87 bears the N6-acetyllysine mark. Residues tyrosine 207 and lysine 213 each coordinate substrate. Residues lysine 213, histidine 232, and glycine 248–threonine 256 contribute to the ATP site. Residues lysine 213 and histidine 232 each contribute to the Mn(2+) site. Position 269 (aspartate 269) interacts with Mn(2+). ATP-binding positions include glutamate 297, arginine 333, arginine 449 to isoleucine 450, and threonine 455. Arginine 333 is a substrate binding site. Lysine 523 carries the N6-acetyllysine modification.

It belongs to the phosphoenolpyruvate carboxykinase (ATP) family. Monomer. Requires Mn(2+) as cofactor.

It is found in the cytoplasm. The enzyme catalyses oxaloacetate + ATP = phosphoenolpyruvate + ADP + CO2. The protein operates within carbohydrate biosynthesis; gluconeogenesis. In terms of biological role, involved in the gluconeogenesis. Catalyzes the conversion of oxaloacetate (OAA) to phosphoenolpyruvate (PEP) through direct phosphoryl transfer between the nucleoside triphosphate and OAA. In Escherichia coli O7:K1 (strain IAI39 / ExPEC), this protein is Phosphoenolpyruvate carboxykinase (ATP).